Consider the following 216-residue polypeptide: MRIILLGAPGAGKGTQAKIIEDKYNIAHISTGDMIRETIKSDSEIGKELKKVLDAGQLVSDEFIIKIVKDRISKDDCKNGFLLDGVPRTIIQAEELDKLGVNIDYIVEVDVKDNLLIERITGRRVHPASGRTYHTKFNPPKVEGKDDITGEDLITRTDDNEDTVRERLSVYHAQTSKLIDFYRNFSSTNTKTPKYIKIDGDQAVDKVSQDIFNQLK.

10–15 provides a ligand contact to ATP; the sequence is GAGKGT. Positions 30-59 are NMP; the sequence is STGDMIRETIKSDSEIGKELKKVLDAGQLV. AMP-binding positions include Thr31, Arg36, 57–59, and Gln92; that span reads QLV. The tract at residues 122–159 is LID; the sequence is GRRVHPASGRTYHTKFNPPKVEGKDDITGEDLITRTDD. ATP-binding positions include Arg123 and 132 to 133; that span reads TY. AMP is bound by residues Arg156 and Arg167. Gln202 lines the ATP pocket.

It belongs to the adenylate kinase family. In terms of assembly, monomer.

It localises to the cytoplasm. The catalysed reaction is AMP + ATP = 2 ADP. It participates in purine metabolism; AMP biosynthesis via salvage pathway; AMP from ADP: step 1/1. Catalyzes the reversible transfer of the terminal phosphate group between ATP and AMP. Plays an important role in cellular energy homeostasis and in adenine nucleotide metabolism. The protein is Adenylate kinase of Francisella philomiragia subsp. philomiragia (strain ATCC 25017 / CCUG 19701 / FSC 153 / O#319-036).